We begin with the raw amino-acid sequence, 272 residues long: Putative pyruvate, phosphate dikinase regulatory protein (272 aa).

153–160 (GVSRTSKT) is an ADP binding site.

This sequence belongs to the pyruvate, phosphate/water dikinase regulatory protein family. PDRP subfamily.

The catalysed reaction is N(tele)-phospho-L-histidyl/L-threonyl-[pyruvate, phosphate dikinase] + ADP = N(tele)-phospho-L-histidyl/O-phospho-L-threonyl-[pyruvate, phosphate dikinase] + AMP + H(+). It catalyses the reaction N(tele)-phospho-L-histidyl/O-phospho-L-threonyl-[pyruvate, phosphate dikinase] + phosphate + H(+) = N(tele)-phospho-L-histidyl/L-threonyl-[pyruvate, phosphate dikinase] + diphosphate. In terms of biological role, bifunctional serine/threonine kinase and phosphorylase involved in the regulation of the pyruvate, phosphate dikinase (PPDK) by catalyzing its phosphorylation/dephosphorylation. This is Putative pyruvate, phosphate dikinase regulatory protein from Chelativorans sp. (strain BNC1).